Here is a 145-residue protein sequence, read N- to C-terminus: D-aminoacyl-tRNA deacylase (145 aa).

The Gly-cisPro motif, important for rejection of L-amino acids signature appears at 137–138 (GP).

The protein belongs to the DTD family. As to quaternary structure, homodimer.

Its subcellular location is the cytoplasm. It catalyses the reaction glycyl-tRNA(Ala) + H2O = tRNA(Ala) + glycine + H(+). It carries out the reaction a D-aminoacyl-tRNA + H2O = a tRNA + a D-alpha-amino acid + H(+). Functionally, an aminoacyl-tRNA editing enzyme that deacylates mischarged D-aminoacyl-tRNAs. Also deacylates mischarged glycyl-tRNA(Ala), protecting cells against glycine mischarging by AlaRS. Acts via tRNA-based rather than protein-based catalysis; rejects L-amino acids rather than detecting D-amino acids in the active site. By recycling D-aminoacyl-tRNA to D-amino acids and free tRNA molecules, this enzyme counteracts the toxicity associated with the formation of D-aminoacyl-tRNA entities in vivo and helps enforce protein L-homochirality. This chain is D-aminoacyl-tRNA deacylase, found in Pseudomonas syringae pv. syringae (strain B728a).